The following is a 245-amino-acid chain: Zinc finger CCCH domain-containing protein 54 (245 aa).

Residues 92–119 (TYCAVACPAFRNGACHRGDSCEFAHGVF) form a C3H1-type zinc finger. The interval 175–204 (GNGDGVTMRMDDEGYDTSRSPVRSGKDDLD) is disordered.

As to quaternary structure, interacts with MARD1/FLZ9 and RD21A. In terms of tissue distribution, specifically expressed in embryo (at protein level).

It localises to the nucleus. Embryo-specific transcription factor required at the globular to heart stage transition in embryo development. This Arabidopsis thaliana (Mouse-ear cress) protein is Zinc finger CCCH domain-containing protein 54.